The following is a 119-amino-acid chain: Protein yippee-like 3 (119 aa).

A Yippee domain is found at 19 to 116 (RRYSCVHCRA…IELSHMIKDN (98 aa)). The Zn(2+) site is built by C23, C26, C79, and C82.

Belongs to the yippee family.

The protein localises to the nucleus. The protein resides in the nucleolus. Its function is as follows. May be involved in proliferation and apoptosis in myeloid precursor cells. The polypeptide is Protein yippee-like 3 (ypel3) (Oryzias latipes (Japanese rice fish)).